We begin with the raw amino-acid sequence, 374 residues long: Alcohol dehydrogenase class-3 (374 aa).

An N-acetylalanine modification is found at Ala-2. Residues Cys-45, His-67, Cys-97, Cys-100, Cys-103, Cys-111, and Cys-174 each coordinate Zn(2+). The residue at position 233 (Lys-233) is an N6-succinyllysine. Ser-247 carries the phosphoserine modification. N6-succinyllysine is present on Lys-315. Phosphoserine is present on residues Ser-324 and Ser-351.

Belongs to the zinc-containing alcohol dehydrogenase family. Class-III subfamily. In terms of assembly, homodimer. Requires Zn(2+) as cofactor.

The protein resides in the cytoplasm. The catalysed reaction is a primary alcohol + NAD(+) = an aldehyde + NADH + H(+). It catalyses the reaction a secondary alcohol + NAD(+) = a ketone + NADH + H(+). The enzyme catalyses S-(hydroxymethyl)glutathione + NADP(+) = S-formylglutathione + NADPH + H(+). It carries out the reaction S-(hydroxymethyl)glutathione + NAD(+) = S-formylglutathione + NADH + H(+). The catalysed reaction is 20-oxo-(5Z,8Z,11Z,14Z)-eicosatetraenoate + NAD(+) + H2O = (5Z,8Z,11Z,14Z)-eicosatetraenedioate + NADH + 2 H(+). It catalyses the reaction 20-hydroxy-(5Z,8Z,11Z,14Z)-eicosatetraenoate + NAD(+) = 20-oxo-(5Z,8Z,11Z,14Z)-eicosatetraenoate + NADH + H(+). The enzyme catalyses S-nitrosoglutathione + NADH + H(+) = S-(hydroxysulfenamide)glutathione + NAD(+). In terms of biological role, catalyzes the oxidation of long-chain primary alcohols and the oxidation of S-(hydroxymethyl) glutathione. Also oxidizes long chain omega-hydroxy fatty acids, such as 20-HETE, producing both the intermediate aldehyde, 20-oxoarachidonate and the end product, a dicarboxylic acid, (5Z,8Z,11Z,14Z)-eicosatetraenedioate. Class-III ADH is remarkably ineffective in oxidizing ethanol. Required for clearance of cellular formaldehyde, a cytotoxic and carcinogenic metabolite that induces DNA damage. Also acts as a S-nitroso-glutathione reductase by catalyzing the NADH-dependent reduction of S-nitrosoglutathione, thereby regulating protein S-nitrosylation. The sequence is that of Alcohol dehydrogenase class-3 from Homo sapiens (Human).